A 663-amino-acid chain; its full sequence is Probable potassium transport system protein Kup (663 aa).

A disordered region spans residues 1 to 23 (MSDNPSSRAGPEVVPTPPPSPAA). Helical transmembrane passes span 81-101 (PANV…VVTF), 137-157 (LLII…VITP), 173-193 (PALE…LFFI), 201-221 (VGAV…ILGV), 224-244 (ILFD…AFFA), 248-268 (WHGF…EALY), 283-303 (WLLV…AILL), 315-335 (LLVP…AAIV), 373-393 (IYVP…VLGF), 399-419 (LAAA…LLFH), 433-453 (AWPL…ANIV), and 455-475 (VEEG…LLST).

This sequence belongs to the HAK/KUP transporter (TC 2.A.72) family.

It localises to the cell inner membrane. The catalysed reaction is K(+)(in) + H(+)(in) = K(+)(out) + H(+)(out). Transport of potassium into the cell. Likely operates as a K(+):H(+) symporter. The polypeptide is Probable potassium transport system protein Kup (Anaeromyxobacter sp. (strain Fw109-5)).